Here is a 572-residue protein sequence, read N- to C-terminus: 2-hydroxyacyl-CoA lyase (572 aa).

The residue at position 2 (alanine 2) is an N-acetylalanine. Glutamate 58 is a binding site for thiamine diphosphate. The thiamine pyrophosphate binding stretch occupies residues threonine 407–tyrosine 488. Positions 457 and 484 each coordinate Mg(2+).

The protein belongs to the TPP enzyme family. As to quaternary structure, homotetramer. Mg(2+) is required as a cofactor. Requires thiamine diphosphate as cofactor.

The catalysed reaction is an (R)-2-hydroxy-long-chain-fatty acyl-CoA = a long-chain fatty aldehyde + formyl-CoA. The enzyme catalyses a 2-hydroxy-3-methyl fatty acyl-CoA = a 2-methyl-branched fatty aldehyde + formyl-CoA. Catalyzes a carbon-carbon cleavage reaction; cleaves a 2-hydroxy-3-methylacyl-CoA into formyl-CoA and a 2-methyl-branched fatty aldehyde. The protein is 2-hydroxyacyl-CoA lyase (HACL) of Arabidopsis thaliana (Mouse-ear cress).